The chain runs to 203 residues: Large ribosomal subunit protein bL25 (203 aa).

Belongs to the bacterial ribosomal protein bL25 family. CTC subfamily. Part of the 50S ribosomal subunit; part of the 5S rRNA/L5/L18/L25 subcomplex. Contacts the 5S rRNA. Binds to the 5S rRNA independently of L5 and L18.

Its function is as follows. This is one of the proteins that binds to the 5S RNA in the ribosome where it forms part of the central protuberance. The chain is Large ribosomal subunit protein bL25 from Rickettsia prowazekii (strain Madrid E).